Here is a 161-residue protein sequence, read N- to C-terminus: C-type natriuretic peptide (161 aa).

Positions Met-1 to Pro-22 are cleaved as a signal peptide. Positions Asp-19–Gly-135 are disordered. A propeptide spanning residues Ala-23–Lys-139 is cleaved from the precursor. 2 stretches are compositionally biased toward low complexity: residues Leu-29 to Pro-60 and Ala-76 to Arg-93. The span at Leu-94–Gln-104 shows a compositional bias: basic and acidic residues. Residues Gly-120–Ser-130 are compositionally biased toward gly residues. An intrachain disulfide couples Cys-145 to Cys-161.

This sequence belongs to the natriuretic peptide family. As to expression, expressed by the venom gland.

Its subcellular location is the secreted. Its function is as follows. Snake venom natriuretic peptide that has a vasorelaxant activity in rat aortic strips and a diuretic potency in anesthetized rats. May act by activating natriuretic receptors (NPR1 and/or NPR2). The chain is C-type natriuretic peptide from Rhabdophis tigrinus tigrinus (Tiger keelback snake).